Consider the following 341-residue polypeptide: Antihemorrhagic factor BJ46a (341 aa).

The signal sequence occupies residues 1–19 (MNSLVALVLLGQIIGSTLS). Cystatin fetuin-A-type domains are found at residues 22–130 (VRGD…AKCH) and 141–254 (RNCP…SDCV). Positions 23-25 (RGD) match the Cell attachment site motif. Cystine bridges form between C28-C332, C85-C96, C110-C129, C143-C146, C205-C217, and C230-C253. The N-linked (GlcNAc...) asparagine glycan is linked to N95. N204 carries an N-linked (GlcNAc...) asparagine glycan. Residues N282 and N293 are each glycosylated (N-linked (GlcNAc...) asparagine).

As to quaternary structure, homodimer. As to expression, expressed by the liver.

It localises to the secreted. Potent inhibitor of hemorrhagic activity but also proteolytic activities of atrolysin C and jararhagin. Inhibition occurs by formation of a non-covalent complex between BJ46a and the proteinases at their metalloproteinase domains. This is Antihemorrhagic factor BJ46a from Bothrops jararaca (Jararaca).